A 370-amino-acid polypeptide reads, in one-letter code: Protein STRICTOSIDINE SYNTHASE-LIKE 9 (370 aa).

Residues Met-1–Gln-26 form the signal peptide. Residues Asn-97 and Asn-171 are each glycosylated (N-linked (GlcNAc...) asparagine).

It belongs to the strictosidine synthase family.

It localises to the vacuole. This is Protein STRICTOSIDINE SYNTHASE-LIKE 9 from Arabidopsis thaliana (Mouse-ear cress).